Reading from the N-terminus, the 49-residue chain is Omega-segestritoxin-Sf1a (49 aa).

Disulfide bonds link cysteine 3–cysteine 22, cysteine 10–cysteine 27, cysteine 21–cysteine 48, and cysteine 29–cysteine 46.

As to expression, expressed by the venom gland.

The protein resides in the secreted. Potent and selective blocker of N-type voltage-gated calcium channels (Cav2.2/CACNA1B). Also blocks vertebrate Cav2.1/CACNA1A (P/Q-type) and Cav1.2/CACNA1C (L-type) channels at very high concentration (2 micromolar). This is Omega-segestritoxin-Sf1a from Segestria florentina (Tube-web spider).